The chain runs to 207 residues: Large ribosomal subunit protein uL4 (207 aa).

Positions 48–70 are disordered; sequence KAQKTRSEVSGGGAKPWRQKGTG.

Belongs to the universal ribosomal protein uL4 family. Part of the 50S ribosomal subunit.

Its function is as follows. One of the primary rRNA binding proteins, this protein initially binds near the 5'-end of the 23S rRNA. It is important during the early stages of 50S assembly. It makes multiple contacts with different domains of the 23S rRNA in the assembled 50S subunit and ribosome. Functionally, forms part of the polypeptide exit tunnel. The chain is Large ribosomal subunit protein uL4 from Francisella tularensis subsp. mediasiatica (strain FSC147).